Reading from the N-terminus, the 71-residue chain is UPF0346 protein BcerKBAB4_2120 (71 aa).

This sequence belongs to the UPF0346 family.

This is UPF0346 protein BcerKBAB4_2120 from Bacillus mycoides (strain KBAB4) (Bacillus weihenstephanensis).